A 682-amino-acid chain; its full sequence is ATP-dependent DNA helicase RecG (682 aa).

The wedge domain stretch occupies residues 46 to 139 (ELRDLEEVKH…LKNGPHQEDK (94 aa)). Residues 271-432 (DMSSPYRMNR…VFGEMDVSVI (162 aa)) enclose the Helicase ATP-binding domain. 284–291 (GDVGSGKT) contacts ATP. The short motif at 385 to 388 (DEQH) is the DEAH box element. The Helicase C-terminal domain occupies 451–611 (MLDRILAFVE…GFELSEKDLE (161 aa)).

It belongs to the helicase family. RecG subfamily. As to quaternary structure, monomer. Interacts with SSB (sbbA), via the latter's 6 C-terminal residues. Colocalizes with DNA pol III subunit gamma/tau (dnaX).

The protein localises to the cytoplasm. It localises to the nucleoid. It carries out the reaction Couples ATP hydrolysis with the unwinding of duplex DNA by translocating in the 3'-5' direction.. The enzyme catalyses ATP + H2O = ADP + phosphate + H(+). With respect to regulation, replication fork regression on Holliday junctions (HJ) is inhibited by DisA; DisA inhibits the ATPase activity of RecG. Functionally, critical role in recombination and DNA repair. Helps process Holliday junction intermediates to mature products by catalyzing branch migration. Has a DNA unwinding activity characteristic of a DNA helicase with 3'-5' polarity. Unwinds branched duplex DNA (Y-DNA), Holliday junction (HJ) DNA and partially replicated forks as well as catalyzing fork reversal/regression. Does not seem to unwind R-loops. Inhibits the diadenylate cyclase (DAC) activity of DisA in the presence but not absence of HJ DNA, possibly by relocating DisA from the junction. This chain is ATP-dependent DNA helicase RecG, found in Bacillus subtilis (strain 168).